A 218-amino-acid polypeptide reads, in one-letter code: Cell division protein SepF (218 aa).

The interval 25–115 is disordered; it reads DVAASTDNVI…IANRREQYQQ (91 aa). Over residues 29-43 the composition is skewed to polar residues; sequence STDNVIPRSQQSVRA. The span at 47 to 63 shows a compositional bias: basic and acidic residues; sequence PKQEPRNNHVQQDHQAR. A compositionally biased stretch (polar residues) spans 102–115; the sequence is STSSIANRREQYQQ.

This sequence belongs to the SepF family. Homodimer. Interacts with FtsZ.

Its subcellular location is the cytoplasm. Functionally, cell division protein that is part of the divisome complex and is recruited early to the Z-ring. Probably stimulates Z-ring formation, perhaps through the cross-linking of FtsZ protofilaments. Its function overlaps with FtsA. The protein is Cell division protein SepF of Streptococcus pyogenes serotype M5 (strain Manfredo).